The following is a 325-amino-acid chain: MQTSLLKPKIIAVESLGESHAKVVMEPFERGYGHTLGNALRRVLLSSMIGYAPTEVTIAGVVHEYSTLDGVQEDVVNLLLNLKGVVFKLHNRDEVTVTLRKEGEGVVTAGDIELAHDCEVINPDHVIAHLSKGGKLDVQIKVEKGRGYVPGNVRRYGEESAKIIGRIVLDASFSPVRRVSYAVESARVEQRTDLDKLVMNIETNGVISPEEAIRQSARILVDQLSVFAALEGTEATAEAPSRAPQIDPILLRPVDDLELTVRSANCLKAENIYYIGDLIQRTENELLKTPNLGRKSLNEIKEVLASRGLTLGMKLENWPPAGLDK.

An alpha N-terminal domain (alpha-NTD) region spans residues 1-231 (MQTSLLKPKI…DQLSVFAALE (231 aa)). The interval 246-325 (IDPILLRPVD…ENWPPAGLDK (80 aa)) is alpha C-terminal domain (alpha-CTD).

Belongs to the RNA polymerase alpha chain family. Homodimer. The RNAP catalytic core consists of 2 alpha, 1 beta, 1 beta' and 1 omega subunit. When a sigma factor is associated with the core the holoenzyme is formed, which can initiate transcription.

It catalyses the reaction RNA(n) + a ribonucleoside 5'-triphosphate = RNA(n+1) + diphosphate. In terms of biological role, DNA-dependent RNA polymerase catalyzes the transcription of DNA into RNA using the four ribonucleoside triphosphates as substrates. The sequence is that of DNA-directed RNA polymerase subunit alpha from Paraburkholderia phytofirmans (strain DSM 17436 / LMG 22146 / PsJN) (Burkholderia phytofirmans).